Reading from the N-terminus, the 199-residue chain is ATP-dependent Clp protease proteolytic subunit (199 aa).

The Nucleophile role is filled by S98. H123 is an active-site residue.

The protein belongs to the peptidase S14 family. Fourteen ClpP subunits assemble into 2 heptameric rings which stack back to back to give a disk-like structure with a central cavity, resembling the structure of eukaryotic proteasomes.

The protein resides in the cytoplasm. It carries out the reaction Hydrolysis of proteins to small peptides in the presence of ATP and magnesium. alpha-casein is the usual test substrate. In the absence of ATP, only oligopeptides shorter than five residues are hydrolyzed (such as succinyl-Leu-Tyr-|-NHMec, and Leu-Tyr-Leu-|-Tyr-Trp, in which cleavage of the -Tyr-|-Leu- and -Tyr-|-Trp bonds also occurs).. Functionally, cleaves peptides in various proteins in a process that requires ATP hydrolysis. Has a chymotrypsin-like activity. Plays a major role in the degradation of misfolded proteins. The chain is ATP-dependent Clp protease proteolytic subunit from Ehrlichia chaffeensis (strain ATCC CRL-10679 / Arkansas).